The primary structure comprises 444 residues: NADH-quinone oxidoreductase subunit F (444 aa).

Position 61 to 70 (61 to 70) interacts with NAD(+); that stretch reads GRGGAGFSTG. 176–223 lines the FMN pocket; that stretch reads GAGRYICGEETALINSLEGRRANPRSKPPFPAVFGLWGKPTCVNNVET. [4Fe-4S] cluster-binding residues include Cys-353, Cys-356, Cys-359, and Cys-400.

This sequence belongs to the complex I 51 kDa subunit family. As to quaternary structure, composed of 13 different subunits. Subunits NuoCD, E, F, and G constitute the peripheral sector of the complex. FMN is required as a cofactor. [4Fe-4S] cluster serves as cofactor.

It catalyses the reaction a quinone + NADH + 5 H(+)(in) = a quinol + NAD(+) + 4 H(+)(out). Functionally, NDH-1 shuttles electrons from NADH, via FMN and iron-sulfur (Fe-S) centers, to quinones in the respiratory chain. Couples the redox reaction to proton translocation (for every two electrons transferred, four hydrogen ions are translocated across the cytoplasmic membrane), and thus conserves the redox energy in a proton gradient. The chain is NADH-quinone oxidoreductase subunit F (nuoF) from Buchnera aphidicola subsp. Acyrthosiphon pisum (strain APS) (Acyrthosiphon pisum symbiotic bacterium).